We begin with the raw amino-acid sequence, 241 residues long: MSMLFYTLITAFLIGIQAEPHSESNVPAGHTIPQAHWTKLQHSLDTALRRARSAPAAAIAARVAGQTRNITVDPRLFKKRRLRSPRVLFSTQPPREAADTQDLDFEVGGAAPFNRTHRSKRSSSHPIFHRGEFSVCDSVSVWVGDKTTATDIKGKEVMVLGEVNINNSVFKQYFFETKCRDPNPVDSGCRGIDSKHWNSYCTTTHTFVKALTMDGKQAAWRFIRIDTACVCVLSRKAVRRA.

The signal sequence occupies residues 1 to 18; the sequence is MSMLFYTLITAFLIGIQA. Positions 19–121 are excised as a propeptide; the sequence is EPHSESNVPA…PFNRTHRSKR (103 aa). N-linked (GlcNAc...) asparagine glycans are attached at residues Asn-69 and Asn-114. 3 disulfide bridges follow: Cys-136–Cys-201, Cys-179–Cys-229, and Cys-189–Cys-231. Residues Tyr-173 and Lys-209 each coordinate a 1-acyl-sn-glycero-3-phospho-(1D-myo-inositol). A 1-acyl-sn-glycero-3-phospho-L-serine is bound at residue Lys-209.

The protein belongs to the NGF-beta family. Homodimer. The homodimer interacts with a single NTRK1 chain. The homodimer interacts with a single NGFR chain. The NGF dimer interacts with a single SORCS2 chain (via extracellular domain). The NGF precursor (proNGF) binds to a receptor complex formed by SORT1 and NGFR, which leads to NGF endocytosis. Both mature NGF and the immature NGF precursor (proNGF) interact with SORCS2 and with the heterodimer formed by SORCS2 and NGFR (via extracellular domains). The NGF precursor (proNGF) has much higher affinity for SORCS2 than mature NGF. The NGF precursor (proNGF) has much higher affinity for SORT1 than mature NGF. Interacts with ADAM10 in a divalent cation-dependent manner. Interaction with SORCS3.

Its subcellular location is the secreted. It is found in the endosome lumen. Nerve growth factor is important for the development and maintenance of the sympathetic and sensory nervous systems. Extracellular ligand for the NTRK1 and NGFR receptors, activates cellular signaling cascades to regulate neuronal proliferation, differentiation and survival. The immature NGF precursor (proNGF) functions as a ligand for the heterodimeric receptor formed by SORCS2 and NGFR, and activates cellular signaling cascades that lead to inactivation of RAC1 and/or RAC2, reorganization of the actin cytoskeleton and neuronal growth cone collapse. In contrast to mature NGF, the precursor form (proNGF) promotes neuronal apoptosis (in vitro). Inhibits metalloproteinase-dependent proteolysis of platelet glycoprotein VI. Binds lysophosphatidylinositol and lysophosphatidylserine between the two chains of the homodimer. The lipid-bound form promotes histamine relase from mast cells, contrary to the lipid-free form. This chain is Beta-nerve growth factor (NGF), found in Homo sapiens (Human).